Here is a 420-residue protein sequence, read N- to C-terminus: Exodeoxyribonuclease 7 large subunit (420 aa).

It belongs to the XseA family. In terms of assembly, heterooligomer composed of large and small subunits.

The protein localises to the cytoplasm. The catalysed reaction is Exonucleolytic cleavage in either 5'- to 3'- or 3'- to 5'-direction to yield nucleoside 5'-phosphates.. Functionally, bidirectionally degrades single-stranded DNA into large acid-insoluble oligonucleotides, which are then degraded further into small acid-soluble oligonucleotides. The polypeptide is Exodeoxyribonuclease 7 large subunit (Helicobacter pylori (strain P12)).